The chain runs to 208 residues: Ribonuclease HII (208 aa).

The 193-residue stretch at 11–203 (GPVAGVDEAG…VAAAHEQWLK (193 aa)) folds into the RNase H type-2 domain. Positions 17, 18, and 112 each coordinate a divalent metal cation.

Belongs to the RNase HII family. Mn(2+) serves as cofactor. Requires Mg(2+) as cofactor.

The protein resides in the cytoplasm. The enzyme catalyses Endonucleolytic cleavage to 5'-phosphomonoester.. In terms of biological role, endonuclease that specifically degrades the RNA of RNA-DNA hybrids. The polypeptide is Ribonuclease HII (Corynebacterium jeikeium (strain K411)).